An 800-amino-acid chain; its full sequence is DNA topoisomerase 4 subunit A (800 aa).

The 465-residue stretch at 31-495 (LPDVRDGLKP…EIEEIKIDKE (465 aa)) folds into the Topo IIA-type catalytic domain. Tyr119 serves as the catalytic O-(5'-phospho-DNA)-tyrosine intermediate.

It belongs to the type II topoisomerase GyrA/ParC subunit family. ParC type 2 subfamily. As to quaternary structure, heterotetramer composed of ParC and ParE.

It is found in the cell membrane. It carries out the reaction ATP-dependent breakage, passage and rejoining of double-stranded DNA.. Its function is as follows. Topoisomerase IV is essential for chromosome segregation. It relaxes supercoiled DNA. Performs the decatenation events required during the replication of a circular DNA molecule. The protein is DNA topoisomerase 4 subunit A of Staphylococcus aureus (strain N315).